The sequence spans 1484 residues: Chromosome partition protein MukB (1484 aa).

Gly34 to Ser41 serves as a coordination point for ATP. 6 coiled-coil regions span residues Asn338–Gln415, Gln496–Trp604, Ala781–Ser805, Glu835–Gln868, His903–Ala1115, and Asp1206–Val1265. Residues Pro666 to Arg783 are flexible hinge.

Belongs to the SMC family. MukB subfamily. Homodimerization via its hinge domain. Binds to DNA via its C-terminal region. Interacts, and probably forms a ternary complex, with MukE and MukF via its C-terminal region. The complex formation is stimulated by calcium or magnesium. Interacts with tubulin-related protein FtsZ.

The protein resides in the cytoplasm. It is found in the nucleoid. Functionally, plays a central role in chromosome condensation, segregation and cell cycle progression. Functions as a homodimer, which is essential for chromosome partition. Involved in negative DNA supercoiling in vivo, and by this means organize and compact chromosomes. May achieve or facilitate chromosome segregation by condensation DNA from both sides of a centrally located replisome during cell division. The protein is Chromosome partition protein MukB of Sodalis glossinidius (strain morsitans).